A 97-amino-acid chain; its full sequence is YcgL domain-containing protein Maqu_1609 (97 aa).

In terms of domain architecture, YcgL spans 5–89 (EFVSVFRSSK…EQDTYIVDFK (85 aa)).

This is YcgL domain-containing protein Maqu_1609 from Marinobacter nauticus (strain ATCC 700491 / DSM 11845 / VT8) (Marinobacter aquaeolei).